Consider the following 316-residue polypeptide: Ferrochelatase (316 aa).

Positions 188 and 269 each coordinate Fe cation.

It belongs to the ferrochelatase family.

It is found in the cytoplasm. It carries out the reaction heme b + 2 H(+) = protoporphyrin IX + Fe(2+). It functions in the pathway porphyrin-containing compound metabolism; protoheme biosynthesis; protoheme from protoporphyrin-IX: step 1/1. Functionally, catalyzes the ferrous insertion into protoporphyrin IX. This is Ferrochelatase from Wolinella succinogenes (strain ATCC 29543 / DSM 1740 / CCUG 13145 / JCM 31913 / LMG 7466 / NCTC 11488 / FDC 602W) (Vibrio succinogenes).